The chain runs to 400 residues: Argininosuccinate synthase (400 aa).

ATP-binding positions include 10–18 (AYSGGVDTS) and A38. Y89 provides a ligand contact to L-citrulline. G119 lines the ATP pocket. The L-aspartate site is built by T121, N125, and D126. Position 125 (N125) interacts with L-citrulline. Residues R129, S177, S186, E262, and Y274 each coordinate L-citrulline.

It belongs to the argininosuccinate synthase family. Type 1 subfamily. In terms of assembly, homotetramer.

The protein resides in the cytoplasm. It carries out the reaction L-citrulline + L-aspartate + ATP = 2-(N(omega)-L-arginino)succinate + AMP + diphosphate + H(+). It functions in the pathway amino-acid biosynthesis; L-arginine biosynthesis; L-arginine from L-ornithine and carbamoyl phosphate: step 2/3. The sequence is that of Argininosuccinate synthase from Prochlorococcus marinus (strain NATL2A).